The chain runs to 210 residues: Large ribosomal subunit protein uL4 (210 aa).

A disordered region spans residues 56 to 80 (FVSGGGKKPWRQKGTGRARAGSTRS).

This sequence belongs to the universal ribosomal protein uL4 family. Part of the 50S ribosomal subunit.

Its function is as follows. One of the primary rRNA binding proteins, this protein initially binds near the 5'-end of the 23S rRNA. It is important during the early stages of 50S assembly. It makes multiple contacts with different domains of the 23S rRNA in the assembled 50S subunit and ribosome. Forms part of the polypeptide exit tunnel. The chain is Large ribosomal subunit protein uL4 from Solidesulfovibrio magneticus (strain ATCC 700980 / DSM 13731 / RS-1) (Desulfovibrio magneticus).